A 445-amino-acid chain; its full sequence is Phosphoglucosamine mutase (445 aa).

S102 functions as the Phosphoserine intermediate in the catalytic mechanism. Positions 102, 241, 243, and 245 each coordinate Mg(2+). S102 is subject to Phosphoserine.

Belongs to the phosphohexose mutase family. The cofactor is Mg(2+). Activated by phosphorylation.

The catalysed reaction is alpha-D-glucosamine 1-phosphate = D-glucosamine 6-phosphate. In terms of biological role, catalyzes the conversion of glucosamine-6-phosphate to glucosamine-1-phosphate. In Shewanella pealeana (strain ATCC 700345 / ANG-SQ1), this protein is Phosphoglucosamine mutase.